The chain runs to 423 residues: Histidine--tRNA ligase (423 aa).

The protein belongs to the class-II aminoacyl-tRNA synthetase family. As to quaternary structure, homodimer.

The protein localises to the cytoplasm. The enzyme catalyses tRNA(His) + L-histidine + ATP = L-histidyl-tRNA(His) + AMP + diphosphate + H(+). The chain is Histidine--tRNA ligase from Prochlorococcus marinus (strain NATL1A).